We begin with the raw amino-acid sequence, 130 residues long: MMRQSLQAVLPKISGNKTSLLRKSVCSDLLTLFNSPHSALPSLLVSGMPEWQVHNPSDKHLQSWYCRQLRSALLFHEPRIAALQVNLKEAYCHTLAISLEIMLYHDDEPLTFDLVWDNGGWRSATLENVS.

The protein belongs to the GpW/Gp25 family. IraD subfamily. In terms of assembly, interacts with RssB.

Its subcellular location is the cytoplasm. In terms of biological role, inhibits RpoS proteolysis by regulating RssB activity, thereby increasing the stability of the sigma stress factor RpoS during oxidative stress. Its effect on RpoS stability is due to its interaction with RssB, which probably blocks the interaction of RssB with RpoS, and the consequent delivery of the RssB-RpoS complex to the ClpXP protein degradation pathway. The polypeptide is Anti-adapter protein IraD (Escherichia coli O7:K1 (strain IAI39 / ExPEC)).